Reading from the N-terminus, the 637-residue chain is Probable serine/threonine-protein kinase DDB_G0283065 (637 aa).

Disordered regions lie at residues 36–88 (NNNN…KFNR) and 155–234 (NSNN…RFNN). Residues 53–85 (NNSTTKSIDNNNNNTNNSNSNNNNNDNIKNNNK) are compositionally biased toward low complexity. The Protein kinase domain occupies 236–629 (FNDVRVLGKG…NQISTDYDNF (394 aa)). ATP is bound by residues 242–250 (LGKGGFGIV) and Lys-265. Catalysis depends on Asp-479, which acts as the Proton acceptor.

This sequence belongs to the protein kinase superfamily. Ser/Thr protein kinase family. GCN2 subfamily.

The catalysed reaction is L-seryl-[protein] + ATP = O-phospho-L-seryl-[protein] + ADP + H(+). It catalyses the reaction L-threonyl-[protein] + ATP = O-phospho-L-threonyl-[protein] + ADP + H(+). This chain is Probable serine/threonine-protein kinase DDB_G0283065, found in Dictyostelium discoideum (Social amoeba).